The primary structure comprises 336 residues: Probable RNA methyltransferase Anae109_4379 (336 aa).

Residue glutamate 86 is the Proton acceptor of the active site. Positions 93-322 (FDTHHTVCLS…PIVRRYSGGQ (230 aa)) constitute a Radical SAM core domain. Cysteine 100 and cysteine 328 form a disulfide bridge. [4Fe-4S] cluster is bound by residues cysteine 107, cysteine 111, and cysteine 114. Residues 154–155 (GE), serine 186, and 209–211 (SLN) contribute to the S-adenosyl-L-methionine site. Cysteine 328 acts as the S-methylcysteine intermediate in catalysis.

Belongs to the radical SAM superfamily. RlmN family. It depends on [4Fe-4S] cluster as a cofactor.

Its subcellular location is the cytoplasm. This chain is Probable RNA methyltransferase Anae109_4379, found in Anaeromyxobacter sp. (strain Fw109-5).